A 619-amino-acid polypeptide reads, in one-letter code: 1-deoxy-D-xylulose-5-phosphate synthase (619 aa).

Residues H74 and 115-117 (GHS) each bind thiamine diphosphate. Residue D146 coordinates Mg(2+). Residues 147–148 (GA), N175, and Y285 each bind thiamine diphosphate. N175 provides a ligand contact to Mg(2+). The tract at residues 289–310 (EKSPSKYHGIPPSNDKKEEPNK) is disordered. Thiamine diphosphate is bound at residue E365.

Belongs to the transketolase family. DXPS subfamily. Homodimer. Requires Mg(2+) as cofactor. The cofactor is thiamine diphosphate.

The catalysed reaction is D-glyceraldehyde 3-phosphate + pyruvate + H(+) = 1-deoxy-D-xylulose 5-phosphate + CO2. Its pathway is metabolic intermediate biosynthesis; 1-deoxy-D-xylulose 5-phosphate biosynthesis; 1-deoxy-D-xylulose 5-phosphate from D-glyceraldehyde 3-phosphate and pyruvate: step 1/1. Functionally, catalyzes the acyloin condensation reaction between C atoms 2 and 3 of pyruvate and glyceraldehyde 3-phosphate to yield 1-deoxy-D-xylulose-5-phosphate (DXP). The protein is 1-deoxy-D-xylulose-5-phosphate synthase of Clostridium botulinum (strain Alaska E43 / Type E3).